Reading from the N-terminus, the 254-residue chain is 3-deoxy-manno-octulosonate cytidylyltransferase (254 aa).

It belongs to the KdsB family.

The protein localises to the cytoplasm. It carries out the reaction 3-deoxy-alpha-D-manno-oct-2-ulosonate + CTP = CMP-3-deoxy-beta-D-manno-octulosonate + diphosphate. Its pathway is nucleotide-sugar biosynthesis; CMP-3-deoxy-D-manno-octulosonate biosynthesis; CMP-3-deoxy-D-manno-octulosonate from 3-deoxy-D-manno-octulosonate and CTP: step 1/1. It functions in the pathway bacterial outer membrane biogenesis; lipopolysaccharide biosynthesis. In terms of biological role, activates KDO (a required 8-carbon sugar) for incorporation into bacterial lipopolysaccharide in Gram-negative bacteria. The polypeptide is 3-deoxy-manno-octulosonate cytidylyltransferase (Bordetella parapertussis (strain 12822 / ATCC BAA-587 / NCTC 13253)).